Consider the following 596-residue polypeptide: Cell adhesion molecule CEACAM20 (596 aa).

The N-terminal stretch at 1–30 (MGPADSWGHHWMGILLSASLCTVWSPPAAA) is a signal peptide. Topologically, residues 31–450 (QLTLNANPLD…SSLSSGAIAG (420 aa)) are extracellular. Ig-like C2-type domains lie at 58 to 154 (PQIH…PIFL), 160 to 246 (PDPV…GTLK), 256 to 341 (PQVV…LELT), and 346 to 432 (PDQV…TSVL). A disulfide bridge links cysteine 90 with cysteine 138. Residues asparagine 96 and asparagine 105 are each glycosylated (N-linked (GlcNAc...) asparagine). Cysteine 276 and cysteine 324 are oxidised to a cystine. N-linked (GlcNAc...) asparagine glycans are attached at residues asparagine 280, asparagine 306, asparagine 317, asparagine 368, and asparagine 415. A disulfide bridge links cysteine 375 with cysteine 416. The helical transmembrane segment at 451 to 471 (IVIGILAVIAVASELGYFLCI) threads the bilayer. Over 472–585 (RNARRPSRKT…SIYEELVNPE (114 aa)) the chain is Cytoplasmic. Disordered regions lie at residues 477–510 (PSRK…LSPE) and 527–563 (QPPD…LMPP). Over residues 501 to 510 (EPSSESLSPE) the composition is skewed to low complexity. Pro residues predominate over residues 553–562 (WKPPPKPLMP). A phosphotyrosine mark is found at tyrosine 578 and tyrosine 589.

Belongs to the immunoglobulin superfamily. CEA family. As to quaternary structure, interacts (via extracellular domain) with PTPRH (via extracellular domain); the interaction dephosphorylates CEACAM20. Interacts (phosphorylated form) with SYK (via SH2 domains); the interaction further enhances CEACAM20 phosphorylation. Post-translationally, phosphorylated on tyrosine residues by SYK, SRC and FYN in vitro.

It is found in the cell projection. The protein localises to the microvillus membrane. It localises to the apical cell membrane. Functionally, together with the tyrosine-protein kinase SYK, enhances production of the cytokine CXCL8/IL-8 via the NFKB pathway and may thus have a role in the intestinal immune response. This chain is Cell adhesion molecule CEACAM20, found in Homo sapiens (Human).